Here is a 375-residue protein sequence, read N- to C-terminus: Dehydrodolichyl diphosphate synthase complex subunit NUS1 (375 aa).

Over residues 1 to 28 (MPTMIKKDDKAMEPPNEKPHRKIERDDV) the composition is skewed to basic and acidic residues. Residues 1-48 (MPTMIKKDDKAMEPPNEKPHRKIERDDVPESSNHIPPPESGVLKGGKV) are disordered. A helical transmembrane segment spans residues 97–119 (YLFYKFLLVLLYICFGLFRYGQY).

Belongs to the UPP synthase family. In terms of assembly, forms an active dehydrodolichyl diphosphate synthase complex with either SRT1 or RER2. It depends on Mg(2+) as a cofactor.

The protein localises to the endoplasmic reticulum membrane. Its subcellular location is the lipid droplet. It is found in the nucleus membrane. It carries out the reaction n isopentenyl diphosphate + (2E,6E)-farnesyl diphosphate = a di-trans,poly-cis-polyprenyl diphosphate + n diphosphate. The protein operates within protein modification; protein glycosylation. In terms of biological role, with SRT1 or RER2, forms the dehydrodolichyl diphosphate synthase (DDS) complex, an essential component of the dolichol monophosphate (Dol-P) biosynthetic machinery. Adds multiple copies of isopentenyl pyrophosphate (IPP) to farnesyl pyrophosphate (FPP) to produce dehydrodolichyl diphosphate (Dedol-PP), a precursor of dolichol which is utilized as a sugar carrier in protein glycosylation in the endoplasmic reticulum (ER). The polypeptide is Dehydrodolichyl diphosphate synthase complex subunit NUS1 (NUS1) (Saccharomyces cerevisiae (strain ATCC 204508 / S288c) (Baker's yeast)).